We begin with the raw amino-acid sequence, 188 residues long: Methylated-DNA--protein-cysteine methyltransferase (188 aa).

Positions 120, 121, and 134 each coordinate DNA. Cys151 (nucleophile; methyl group acceptor) is an active-site residue. Ser157 is a binding site for DNA.

It belongs to the MGMT family.

The protein localises to the nucleus. The enzyme catalyses a 6-O-methyl-2'-deoxyguanosine in DNA + L-cysteinyl-[protein] = S-methyl-L-cysteinyl-[protein] + a 2'-deoxyguanosine in DNA. The catalysed reaction is a 4-O-methyl-thymidine in DNA + L-cysteinyl-[protein] = a thymidine in DNA + S-methyl-L-cysteinyl-[protein]. In terms of biological role, involved in the cellular defense against the biological effects of O6-methylguanine (O6-MeG) and O4-methylthymine (O4-MeT) in DNA. Repairs the methylated nucleobase in DNA by stoichiometrically transferring the methyl group to a cysteine residue in the enzyme. This is a suicide reaction: the enzyme is irreversibly inactivated. Prefers double-stranded DNA over single-stranded DNA as substrate. The sequence is that of Methylated-DNA--protein-cysteine methyltransferase (MGT1) from Saccharomyces cerevisiae (strain ATCC 204508 / S288c) (Baker's yeast).